Here is an 814-residue protein sequence, read N- to C-terminus: Leucine--tRNA ligase (814 aa).

The 'HIGH' region signature appears at 42–52 (PYPSGNLHIGH). The short motif at 582–586 (KMSKS) is the 'KMSKS' region element. K585 contributes to the ATP binding site.

It belongs to the class-I aminoacyl-tRNA synthetase family.

It localises to the cytoplasm. It carries out the reaction tRNA(Leu) + L-leucine + ATP = L-leucyl-tRNA(Leu) + AMP + diphosphate. The polypeptide is Leucine--tRNA ligase (Herpetosiphon aurantiacus (strain ATCC 23779 / DSM 785 / 114-95)).